The primary structure comprises 243 residues: Phosphate-specific transport system accessory protein PhoU (243 aa).

This sequence belongs to the PhoU family. Homodimer.

It localises to the cytoplasm. Functionally, part of the phosphate (Pho) regulon, which plays a key role in phosphate homeostasis. Encoded together with proteins of the phosphate-specific transport (Pst) system in the polycistronic pstSCAB-phoU operon. PhoU is essential for the repression of the Pho regulon at high phosphate conditions. In this role, it may bind, possibly as a chaperone, to PhoR, PhoB or a PhoR-PhoB complex to promote dephosphorylation of phospho-PhoB, or inhibit formation of the PhoR-PhoB transitory complex. In Serratia marcescens, this protein is Phosphate-specific transport system accessory protein PhoU.